The following is a 386-amino-acid chain: Alanine racemase (386 aa).

Residue K48 is the Proton acceptor; specific for D-alanine of the active site. K48 carries the N6-(pyridoxal phosphate)lysine modification. R147 provides a ligand contact to substrate. Catalysis depends on Y279, which acts as the Proton acceptor; specific for L-alanine. A substrate-binding site is contributed by M327.

The protein belongs to the alanine racemase family. It depends on pyridoxal 5'-phosphate as a cofactor.

It carries out the reaction L-alanine = D-alanine. It participates in amino-acid biosynthesis; D-alanine biosynthesis; D-alanine from L-alanine: step 1/1. Functionally, catalyzes the interconversion of L-alanine and D-alanine. May also act on other amino acids. The protein is Alanine racemase (alr) of Prochlorococcus marinus (strain SARG / CCMP1375 / SS120).